We begin with the raw amino-acid sequence, 282 residues long: Aminoglycoside 6-adenylyltransferase (282 aa).

The catalysed reaction is streptomycin + ATP = 6-O-adenylylstreptomycin + diphosphate. Required for streptomycin resistance. Adenylates streptomycin on the O-6 residue. This Staphylococcus aureus protein is Aminoglycoside 6-adenylyltransferase.